The following is a 96-amino-acid chain: Large ribosomal subunit protein bL28 (96 aa).

A disordered region spans residues 1–23 (MSRVCELSGKAPMTGNTVSHANN).

This sequence belongs to the bacterial ribosomal protein bL28 family.

This is Large ribosomal subunit protein bL28 from Cereibacter sphaeroides (strain ATCC 17029 / ATH 2.4.9) (Rhodobacter sphaeroides).